Consider the following 548-residue polypeptide: Membrane protein insertase YidC (548 aa).

The chain crosses the membrane as a helical span at residues 6-26; it reads NLLVIALLFVSFMIWQAWEQD. The interval 28 to 56 is disordered; the sequence is NPQPQTQQTTQTTTTAAGSAADQGVPASG. The segment covering 29–42 has biased composition (low complexity); sequence PQPQTQQTTQTTTT. Helical transmembrane passes span 350–370, 424–444, 458–478, and 499–519; these read FVGN…GIMY, FPLI…MGSI, LSAQ…MFFI, and PVIF…YYIV.

This sequence belongs to the OXA1/ALB3/YidC family. Type 1 subfamily. Interacts with the Sec translocase complex via SecD. Specifically interacts with transmembrane segments of nascent integral membrane proteins during membrane integration.

The protein localises to the cell inner membrane. Required for the insertion and/or proper folding and/or complex formation of integral membrane proteins into the membrane. Involved in integration of membrane proteins that insert both dependently and independently of the Sec translocase complex, as well as at least some lipoproteins. Aids folding of multispanning membrane proteins. This Salmonella newport (strain SL254) protein is Membrane protein insertase YidC.